The sequence spans 347 residues: Quinolinate synthase (347 aa).

Residues histidine 47 and serine 68 each coordinate iminosuccinate. Cysteine 113 lines the [4Fe-4S] cluster pocket. Iminosuccinate contacts are provided by residues 139–141 and serine 156; that span reads YAN. Cysteine 200 is a [4Fe-4S] cluster binding site. Iminosuccinate is bound by residues 226–228 and threonine 243; that span reads HPE. Position 297 (cysteine 297) interacts with [4Fe-4S] cluster.

It belongs to the quinolinate synthase family. Type 1 subfamily. It depends on [4Fe-4S] cluster as a cofactor.

The protein resides in the cytoplasm. It carries out the reaction iminosuccinate + dihydroxyacetone phosphate = quinolinate + phosphate + 2 H2O + H(+). It functions in the pathway cofactor biosynthesis; NAD(+) biosynthesis; quinolinate from iminoaspartate: step 1/1. Catalyzes the condensation of iminoaspartate with dihydroxyacetone phosphate to form quinolinate. The chain is Quinolinate synthase from Salmonella choleraesuis (strain SC-B67).